The sequence spans 426 residues: Dihydroorotase (426 aa).

The Zn(2+) site is built by H55 and H57. Substrate-binding positions include 57-59 (HLR) and N89. The Zn(2+) site is built by D147, H174, H233, and D306. D306 is an active-site residue. Substrate contacts are provided by residues H310 and 324 to 325 (FG).

The protein belongs to the metallo-dependent hydrolases superfamily. DHOase family. Class I DHOase subfamily. Zn(2+) is required as a cofactor.

The catalysed reaction is (S)-dihydroorotate + H2O = N-carbamoyl-L-aspartate + H(+). Its pathway is pyrimidine metabolism; UMP biosynthesis via de novo pathway; (S)-dihydroorotate from bicarbonate: step 3/3. Its function is as follows. Catalyzes the reversible cyclization of carbamoyl aspartate to dihydroorotate. This is Dihydroorotase from Thermus aquaticus.